The primary structure comprises 355 residues: Putative beta-lactamase HcpE (355 aa).

A signal peptide spans 1-22; it reads MNIKILKILVGGLFFLSLNAHL. 8 TPR repeats span residues 27–60, 63–96, 98–131, 132–166, 202–240, 245–275, 276–311, and 312–344; these read DNSFLGIGERAYKSGNYSKAASYFKKACNDGVSE, TQLGIIYENGQGTRIDYKKALEYYKTACQADDRE, CFGLGGLYDEGLGTAQNYQEAIDAYAKACVLKHP, ESCYNLGIIYDRKIKGNAAQAVTYYQKSCNFDMAK, GQACRALGSLFENGDAGLDEDFEVAFDYLQKACALNNSG, LGSMYMLGRYVKKDPQKAFNYFKQACDMGSA, VSCSRMGFMYSQGDTVSKDLRKALDNYERGCDMGDE, and VGCFALAGMYYNMKDKENAIMIYDKGCKLGMKQ. 9 disulfide bridges follow: cysteine 54–cysteine 62, cysteine 90–cysteine 98, cysteine 126–cysteine 134, cysteine 160–cysteine 168, cysteine 197–cysteine 205, cysteine 234–cysteine 242, cysteine 270–cysteine 278, cysteine 306–cysteine 314, and cysteine 338–cysteine 346.

The protein belongs to the hcp beta-lactamase family.

It is found in the secreted. It catalyses the reaction a beta-lactam + H2O = a substituted beta-amino acid. May hydrolyze 6-aminopenicillinic acid and 7-aminocephalosporanic acid (ACA) derivatives. In Helicobacter pylori (strain J99 / ATCC 700824) (Campylobacter pylori J99), this protein is Putative beta-lactamase HcpE (hcpE).